The chain runs to 461 residues: MNVLLQELFIIILSAGKGKRMFTSIPKVLHKLAGKPILQHIIDKVLYLKAKKINIVYGYEGKLLRKKIISRGFSLNWTLQSEQNGTGHAVQQVIFKEIGNDNDKILILYGDVPLISINTLRKLLYSHSGFNISLLTAVIDSPDGYGRIIRKNGKISKIIEHEDALSIDKNIREINTGVMVVNRYYLRFWLNKLLNKRNKDKEIYLTDIISIAYKSGNIINSVQPEKVFEIFGINNRFQLMKLEKIYQIEQAKKLLLNGVTLSDYNRFDLRGTLKHGKDIFIDINVVLKGSVIIGDRVKIGNGCVLKNVIINNDVIIHPYSIIEDACLDSNSVIGPFAHIHSKSKIKKNVHVGNFVEIKNTIFGKNSKVGHLSYLGDSDIGKNVNIGAGTITCNFDGKKKNKTIIKNNVFIGANSELIAPVIINSGAVVGAGTTVTKNINRKDKIISRIRQFSILRKENNSK.

The segment at methionine 1–arginine 236 is pyrophosphorylase. Residues lysine 27, glutamine 80, glycine 85 to threonine 86, tyrosine 109 to aspartate 111, glycine 146, glutamate 160, asparagine 175, and asparagine 234 each bind UDP-N-acetyl-alpha-D-glucosamine. Aspartate 111 is a Mg(2+) binding site. Asparagine 234 lines the Mg(2+) pocket. Residues phenylalanine 237–asparagine 257 form a linker region. Residues glycine 258–lysine 461 are N-acetyltransferase. Lysine 358 is a binding site for UDP-N-acetyl-alpha-D-glucosamine. The active-site Proton acceptor is histidine 370. UDP-N-acetyl-alpha-D-glucosamine is bound by residues tyrosine 373 and asparagine 384. The acetyl-CoA site is built by alanine 387, alanine 430, and arginine 447.

The protein in the N-terminal section; belongs to the N-acetylglucosamine-1-phosphate uridyltransferase family. This sequence in the C-terminal section; belongs to the transferase hexapeptide repeat family. Homotrimer. Mg(2+) is required as a cofactor.

It localises to the cytoplasm. The catalysed reaction is alpha-D-glucosamine 1-phosphate + acetyl-CoA = N-acetyl-alpha-D-glucosamine 1-phosphate + CoA + H(+). It carries out the reaction N-acetyl-alpha-D-glucosamine 1-phosphate + UTP + H(+) = UDP-N-acetyl-alpha-D-glucosamine + diphosphate. It participates in nucleotide-sugar biosynthesis; UDP-N-acetyl-alpha-D-glucosamine biosynthesis; N-acetyl-alpha-D-glucosamine 1-phosphate from alpha-D-glucosamine 6-phosphate (route II): step 2/2. It functions in the pathway nucleotide-sugar biosynthesis; UDP-N-acetyl-alpha-D-glucosamine biosynthesis; UDP-N-acetyl-alpha-D-glucosamine from N-acetyl-alpha-D-glucosamine 1-phosphate: step 1/1. Its pathway is bacterial outer membrane biogenesis; LPS lipid A biosynthesis. In terms of biological role, catalyzes the last two sequential reactions in the de novo biosynthetic pathway for UDP-N-acetylglucosamine (UDP-GlcNAc). The C-terminal domain catalyzes the transfer of acetyl group from acetyl coenzyme A to glucosamine-1-phosphate (GlcN-1-P) to produce N-acetylglucosamine-1-phosphate (GlcNAc-1-P), which is converted into UDP-GlcNAc by the transfer of uridine 5-monophosphate (from uridine 5-triphosphate), a reaction catalyzed by the N-terminal domain. The sequence is that of Bifunctional protein GlmU from Wigglesworthia glossinidia brevipalpis.